We begin with the raw amino-acid sequence, 727 residues long: MLRIPIKRALIGLSNSPKGYVRTTGTAASNLIEVFVDGQSVMVEPGTTVLQACEKVGMQIPRFCYHERLSVAGNCRMCLVEIEKAPKVVAACAMPVMKGWNILTNSEKSKKAREGVMEFLLANHPLDCPICDQGGECDLQDQSMMFGSDRSRFLEGKRAVEDKNIGPLVKTIMTRCIQCTRCIRFASEIAGVDDLGTTGRGNDMQVGTYIEKMFMSELSGNVIDICPVGALTSKPYAFTARPWETRKTESIDVMDAVGSNIVVSTRTGEVMRILPRMHEDINEEWISDKTRFAYDGLKRQRLTEPMVRNEKGLLTYTSWEDALSRVAGMLQNFEGNAVAAIAGGLVDAEALVALKDLLNKVDSDNLCTEEIFPTEGAGTDLRSNYLLNTTIAGVEEADVVLLVGTNPRFEAPLFNARIRKSWLHNDLKVALIGSPVDLTYRYDHLGDSPKILQDIASGRHSFCEVLKDAKKPMVVLGSSALQRDDGAAILVAVSNMVQKIRVTTGVAAEWKVMNILHRIASQVAALDLGYKPGVEAIRKNPPKMLFLLGADGGCITRQDLPKDCFIVYQGHHGDVGAPMADVILPGAAYTEKSATYVNTEGRAQQTKVAVTPPGLAREDWKIIRALSEIAGITLPYDTLDQVRNRLEEVSPNLVRYDDIEETNYFQQASELAKLVNQEVLADPLVPPQLTIKDFYMTDSISRASQTMAKCVKAVTEGAQAVEEPSIC.

The transit peptide at 1–23 directs the protein to the mitochondrion; that stretch reads MLRIPIKRALIGLSNSPKGYVRT. A 2Fe-2S ferredoxin-type domain is found at 30–108; the sequence is NLIEVFVDGQ…GWNILTNSEK (79 aa). Residues C64, C75, and C78 each coordinate [2Fe-2S] cluster. K84 is modified (N6-acetyllysine). Residue C92 coordinates [2Fe-2S] cluster. The 4Fe-4S His(Cys)3-ligated-type domain occupies 108-147; sequence KSKKAREGVMEFLLANHPLDCPICDQGGECDLQDQSMMFG. [4Fe-4S] cluster contacts are provided by H124, C128, C131, C137, C176, C179, C182, and C226. In terms of domain architecture, 4Fe-4S Mo/W bis-MGD-type spans 245–301; the sequence is TRKTESIDVMDAVGSNIVVSTRTGEVMRILPRMHEDINEEWISDKTRFAYDGLKRQR. A Phosphoserine modification is found at S461. Residues K467, K499, and K709 each carry the N6-acetyllysine modification.

Belongs to the complex I 75 kDa subunit family. Core subunit of respiratory chain NADH dehydrogenase (Complex I) which is composed of 45 different subunits. This is the largest subunit of complex I and it is a component of the iron-sulfur (IP) fragment of the enzyme. Complex I associates with ubiquinol-cytochrome reductase complex (Complex III) to form supercomplexes. In astrocytes, less complex I is assembled into supercomplexes as compared to neurons. Interacts with MDM2. Interacts with AKAP1. It depends on [2Fe-2S] cluster as a cofactor. Requires [4Fe-4S] cluster as cofactor. Acetylation of Lys-84 is observed in liver mitochondria from fasted mice but not from fed mice. In terms of tissue distribution, brain. More abundant in neurons than in astrocytes (at protein level).

Its subcellular location is the mitochondrion inner membrane. It carries out the reaction a ubiquinone + NADH + 5 H(+)(in) = a ubiquinol + NAD(+) + 4 H(+)(out). Functionally, core subunit of the mitochondrial membrane respiratory chain NADH dehydrogenase (Complex I) which catalyzes electron transfer from NADH through the respiratory chain, using ubiquinone as an electron acceptor. Essential for catalysing the entry and efficient transfer of electrons within complex I. Plays a key role in the assembly and stability of complex I and participates in the association of complex I with ubiquinol-cytochrome reductase complex (Complex III) to form supercomplexes. The sequence is that of NADH-ubiquinone oxidoreductase 75 kDa subunit, mitochondrial (Ndufs1) from Mus musculus (Mouse).